The following is a 249-amino-acid chain: 5'-nucleotidase SurE (249 aa).

A divalent metal cation is bound by residues aspartate 8, aspartate 9, serine 39, and asparagine 91.

Belongs to the SurE nucleotidase family. It depends on a divalent metal cation as a cofactor.

The protein resides in the cytoplasm. It catalyses the reaction a ribonucleoside 5'-phosphate + H2O = a ribonucleoside + phosphate. Its function is as follows. Nucleotidase that shows phosphatase activity on nucleoside 5'-monophosphates. The chain is 5'-nucleotidase SurE from Pseudomonas aeruginosa (strain UCBPP-PA14).